We begin with the raw amino-acid sequence, 99 residues long: uncharacterized protein (99 aa).

This is an uncharacterized protein from Escherichia coli O157:H7.